We begin with the raw amino-acid sequence, 141 residues long: Large ribosomal subunit protein uL11 (141 aa).

The protein belongs to the universal ribosomal protein uL11 family. Part of the ribosomal stalk of the 50S ribosomal subunit. Interacts with L10 and the large rRNA to form the base of the stalk. L10 forms an elongated spine to which L12 dimers bind in a sequential fashion forming a multimeric L10(L12)X complex. One or more lysine residues are methylated.

In terms of biological role, forms part of the ribosomal stalk which helps the ribosome interact with GTP-bound translation factors. This chain is Large ribosomal subunit protein uL11, found in Chloroflexus aurantiacus (strain ATCC 29366 / DSM 635 / J-10-fl).